The chain runs to 182 residues: Meiotic recombination protein REC104 (182 aa).

In terms of assembly, interacts with REC114 and SPO11.

Functionally, potential transcriptional regulator that is required to activate expression of a number of early meiotic genes including HOP1. This chain is Meiotic recombination protein REC104 (REC104), found in Saccharomyces cerevisiae (strain ATCC 204508 / S288c) (Baker's yeast).